Consider the following 192-residue polypeptide: Cobalt-precorrin-6B C(15)-methyltransferase (decarboxylating) (192 aa).

Residues Thr15, 39–43 (GAGTG), Glu62, and Ala90 each bind S-adenosyl-L-methionine.

Belongs to the methyltransferase superfamily. Bacterial-type CbiT family.

It carries out the reaction Co-precorrin-6B + S-adenosyl-L-methionine = Co-precorrin-7 + S-adenosyl-L-homocysteine + CO2. It functions in the pathway cofactor biosynthesis; adenosylcobalamin biosynthesis; cob(II)yrinate a,c-diamide from sirohydrochlorin (anaerobic route): step 8/10. In terms of biological role, catalyzes the methylation of C-15 in cobalt-precorrin-6B followed by the decarboxylation of C-12 to form cobalt-precorrin-7. In Salmonella typhi, this protein is Cobalt-precorrin-6B C(15)-methyltransferase (decarboxylating) (cbiT).